The chain runs to 410 residues: Adenosine receptor A2a (410 aa).

Topologically, residues 1–4 (MGSS) are extracellular. A helical membrane pass occupies residues 5–29 (VYIMVELAIAVLAILGNVLVCWAVW). Topologically, residues 30-39 (INSNLQNVTN) are cytoplasmic. A helical transmembrane segment spans residues 40-63 (FFVVSLAAADIAVGVLAIPFAITI). At 64–74 (STGFCAACHGC) the chain is on the extracellular side. Intrachain disulfides connect Cys-68–Cys-154, Cys-71–Cys-143, and Cys-74–Cys-161. The chain crosses the membrane as a helical span at residues 75-97 (LFFACFVLVLTQSSIFSLLAIAI). At 98–117 (DRYIAIRIPLRYNGLVTGMR) the chain is on the cytoplasmic side. A helical transmembrane segment spans residues 118–140 (AKGIIAICWVLSFAIGLTPMLGW). Topologically, residues 141-168 (NNCSQKDENSTKTCGEGRVTCLFEDVVP) are extracellular. N-linked (GlcNAc...) asparagine glycosylation is found at Asn-142 and Asn-149. Glu-164 contributes to the adenosine binding site. A helical membrane pass occupies residues 169-193 (MNYMVYYNFFAFVLLPLLLMLAIYL). Topologically, residues 194–229 (RIFLAARRQLKQMESQPLPGERTRSTLQKEVHAAKS) are cytoplasmic. A helical transmembrane segment spans residues 230–253 (LAIIVGLFALCWLPLHIINCFTFF). Asn-248 is a binding site for adenosine. A disulfide bridge connects residues Cys-254 and Cys-257. Residues 254 to 261 (CSTCQHAP) lie on the Extracellular side of the membrane. Residues 262 to 285 (PWLMYLAIILSHSNSVVNPFIYAY) form a helical membrane-spanning segment. 2 residues coordinate adenosine: Ser-272 and His-273. Residues 286 to 410 (RIREFRQTFR…ASWSSEFAPS (125 aa)) are Cytoplasmic-facing. The tract at residues 322–410 (HSTEGEQVSL…ASWSSEFAPS (89 aa)) is interaction with GAS2L2. Residues 342 to 410 (ANGSAPHSGR…ASWSSEFAPS (69 aa)) form a disordered region. A compositionally biased stretch (basic and acidic residues) spans 377-389 (TQEHQEGQEHPGL). Positions 401–410 (ASWSSEFAPS) are enriched in polar residues.

It belongs to the G-protein coupled receptor 1 family. In terms of assembly, interacts (via cytoplasmic C-terminal domain) with USP4; the interaction is direct. May interact with DRD4. Interacts with NECAB2. Interacts (via cytoplasmic C-terminal domain) with GAS2L2; interaction enhances receptor-mediated adenylyl cyclase activity. In terms of processing, ubiquitinated. Deubiquitinated by USP4; leading to stabilization and expression at the cell surface.

The protein resides in the cell membrane. Receptor for adenosine. The activity of this receptor is mediated by G proteins which activate adenylyl cyclase. The polypeptide is Adenosine receptor A2a (Adora2a) (Mus musculus (Mouse)).